A 426-amino-acid polypeptide reads, in one-letter code: Histidinol dehydrogenase (426 aa).

NAD(+)-binding residues include Y125, Q187, and N210. Substrate contacts are provided by S233, Q255, and H258. Residues Q255 and H258 each contribute to the Zn(2+) site. Residues E323 and H324 each act as proton acceptor in the active site. Residues H324, D357, E411, and H416 each coordinate substrate. D357 is a binding site for Zn(2+). Residue H416 coordinates Zn(2+).

The protein belongs to the histidinol dehydrogenase family. Zn(2+) is required as a cofactor.

It carries out the reaction L-histidinol + 2 NAD(+) + H2O = L-histidine + 2 NADH + 3 H(+). It functions in the pathway amino-acid biosynthesis; L-histidine biosynthesis; L-histidine from 5-phospho-alpha-D-ribose 1-diphosphate: step 9/9. In terms of biological role, catalyzes the sequential NAD-dependent oxidations of L-histidinol to L-histidinaldehyde and then to L-histidine. The sequence is that of Histidinol dehydrogenase (hisD) from Methanothermobacter thermautotrophicus (strain ATCC 29096 / DSM 1053 / JCM 10044 / NBRC 100330 / Delta H) (Methanobacterium thermoautotrophicum).